The chain runs to 251 residues: Sugar fermentation stimulation protein homolog (251 aa).

The protein belongs to the SfsA family.

This chain is Sugar fermentation stimulation protein homolog, found in Symbiobacterium thermophilum (strain DSM 24528 / JCM 14929 / IAM 14863 / T).